A 254-amino-acid polypeptide reads, in one-letter code: Chymotrypsin-like serine proteinase (254 aa).

A signal peptide spans Met-1–Ala-18. Positions Glu-19–Asn-23 are cleaved as a propeptide — activation peptide. Residues Ile-24 to Gln-254 form the Peptidase S1 domain. The cysteines at positions 53 and 69 are disulfide-linked. Active-site charge relay system residues include His-68 and Asp-117. 3 cysteine pairs are disulfide-bonded: Cys-146-Cys-218, Cys-181-Cys-199, and Cys-208-Cys-233. Ser-212 (charge relay system) is an active-site residue.

Belongs to the peptidase S1 family. In terms of assembly, monomer. As to expression, expressed specifically in the distal quarter of the intestine.

The protein localises to the secreted. It localises to the extracellular space. Its activity is regulated as follows. Activated by an autocatalytic mechanism. Its function is as follows. Specificity similar to chymotrypsin. This Haliotis rufescens (California red abalone) protein is Chymotrypsin-like serine proteinase.